We begin with the raw amino-acid sequence, 587 residues long: 5-aminolevulinate synthase, erythroid-specific, mitochondrial (587 aa).

A mitochondrion-targeting transit peptide spans 1-49; it reads MVAAAMLLRSCPVLSQGPTGLLGKVAKTYQFLFSIGRCPILATQGPTCS. Residue arginine 163 coordinates succinyl-CoA. Pyridoxal 5'-phosphate-binding residues include cysteine 258 and phenylalanine 259. Positions 280 and 299 each coordinate succinyl-CoA. The pyridoxal 5'-phosphate site is built by serine 332, histidine 360, and threonine 388. Lysine 391 is an active-site residue. Position 391 is an N6-(pyridoxal phosphate)lysine (lysine 391). Residues threonine 420 and threonine 421 each coordinate pyridoxal 5'-phosphate. Threonine 508 is a succinyl-CoA binding site.

Belongs to the class-II pyridoxal-phosphate-dependent aminotransferase family. As to quaternary structure, homodimer. Interacts with SUCLA2. The cofactor is pyridoxal 5'-phosphate. Predomnantly expressed in erythroid cells.

It localises to the mitochondrion inner membrane. It is found in the mitochondrion. It catalyses the reaction succinyl-CoA + glycine + H(+) = 5-aminolevulinate + CO2 + CoA. It participates in porphyrin-containing compound metabolism; protoporphyrin-IX biosynthesis; 5-aminolevulinate from glycine: step 1/1. Catalyzes the pyridoxal 5'-phosphate (PLP)-dependent condensation of succinyl-CoA and glycine to form aminolevulinic acid (ALA), with CoA and CO2 as by-products. Contributes significantly to heme formation during erythropoiesis. This is 5-aminolevulinate synthase, erythroid-specific, mitochondrial (Alas2) from Mus musculus (Mouse).